The chain runs to 94 residues: Co-chaperonin GroES (94 aa).

It belongs to the GroES chaperonin family. Heptamer of 7 subunits arranged in a ring. Interacts with the chaperonin GroEL.

The protein localises to the cytoplasm. Together with the chaperonin GroEL, plays an essential role in assisting protein folding. The GroEL-GroES system forms a nano-cage that allows encapsulation of the non-native substrate proteins and provides a physical environment optimized to promote and accelerate protein folding. GroES binds to the apical surface of the GroEL ring, thereby capping the opening of the GroEL channel. The polypeptide is Co-chaperonin GroES (Clostridioides difficile (Peptoclostridium difficile)).